An 816-amino-acid polypeptide reads, in one-letter code: H(+)/Cl(-) exchange transporter 5 (816 aa).

The segment at 1–28 is disordered; sequence MAMWQGAMDNRGFQQGSFNSFQSSSSDE. The Cytoplasmic portion of the chain corresponds to 1–124; it reads MAMWQGAMDN…WALIHSVSDA (124 aa). Residues 12–25 are compositionally biased toward low complexity; sequence GFQQGSFNSFQSSS. A run of 2 helical transmembrane segments spans residues 125 to 162 and 208 to 231; these read FSGW…ICTE and VNYF…VKVF. The short motif at 237 to 241 is the Selectivity filter part_1 element; sequence GSGIP. Ser238 contributes to the chloride binding site. An intramembrane region (helical) is located at residues 240 to 247; sequence IPEIKTIL. 2 helical membrane passes run 256 to 275 and 281 to 300; these read LGKW…VSSG and EGPL…HCFN. The Selectivity filter part_2 motif lies at 279–283; that stretch reads GKEGP. 2 consecutive intramembrane regions (helical) follow at residues 312-324 and 328-336; these read VLSA…VSVA and PIGGVLFSL. Helical transmembrane passes span 348–366, 389–414, 422–442, 498–518, and 523–542; these read LWRS…RSIN, LVPF…IAWC, LGKY…ILAF, MWQL…TFGM, and GLFI…LGVG. A Selectivity filter part_3 motif is present at residues 523–527; it reads GLFIP. Phe525 lines the chloride pocket. An intramembrane region (helical) is located at residues 570–584; sequence GLYAMVGAAACLGGV. Positions 585-587 form an intramembrane region, note=Loop between two helices; it reads TRM. The helical intramembrane region spans 588-599; the sequence is TVSLVVIMFELT. The segment at residues 600–604 is an intramembrane region (note=Loop between two helices); sequence GGLEY. Residues 605-622 traverse the membrane as a helical segment; the sequence is IVPLMAAAMTSKWVADAL. At 623 to 816 the chain is on the cytoplasmic side; it reads GREGIYDAHI…NQDPDSILFN (194 aa). Tyr628 contributes to the chloride binding site. 2 CBS domains span residues 656-720 and 752-812; these read MKPR…ARKK and ILDL…DPDS. Residues Thr666, 687–689, and 794–797 each bind ATP; these read YSG and TKKD.

The protein belongs to the chloride channel (TC 2.A.49) family. ClC-5/CLCN5 subfamily. As to quaternary structure, interacts with NEDD4 and NEDD4L. In terms of processing, ubiquitinated by NEDD4L in the presence of albumin; which promotes endocytosis and proteasomal degradation.

It is found in the golgi apparatus membrane. The protein resides in the endosome membrane. Its subcellular location is the cell membrane. The enzyme catalyses 2 chloride(in) + H(+)(out) = 2 chloride(out) + H(+)(in). Proton-coupled chloride transporter. Functions as antiport system and exchanges chloride ions against protons. Important for normal acidification of the endosome lumen. May play an important role in renal tubular function. The CLC channel family contains both chloride channels and proton-coupled anion transporters that exchange chloride or another anion for protons. The absence of conserved gating glutamate residues is typical for family members that function as channels. In Sus scrofa (Pig), this protein is H(+)/Cl(-) exchange transporter 5 (CLCN5).